A 1429-amino-acid polypeptide reads, in one-letter code: MSSNGSDLGHNNRRNEKGNPDSVHSSMRGSMSSTRRKSINFQNQLQLALESNECDVMYCSLSSGRFRAPNGENFPPHGGKLKLSPLEKYDDANRGVPPPSPAPNSDCFATCVANQLPSQSCSVGSAKPETSVMQKHGMAGNGMVGSGMSGNGMAANGTNYHQRGVSPNSRYRLERYRESQSTPQSKLMDNMGGMPSAVPSVSATRLLLPSNVPLPLAQCENYNAYLGSTVHTPVKRYVPTPPPAMELYSDLSISSSPAANLPTPAAAVASSASTSASAMQSQYANMPYNYRSKCCHSEASHGSLSRTSQTYASCSPACTSPSPAPSTSMSMVFSAASSCSPIMTATSSARSGNHRGDDSDSVIVVPPGGGAMAQIEAENPSGTCLHCNTVRRTTGVHQTTQTTGPISPVPISLPVPMAMPVMSGLNEQMPSQSLESSMVSVQAKRLEGGGNMAVPPGSNQHQLYRSQMASNPRLQHIHHQTQQHQSLQVLPQPQNHHLSCKKRIGMYMRRTTSQFFGVEPSTEAADCALWQGRHRRLAIRCFGMFDTELEYHMQQAIGGGNEDAGQSNGTNGNYAPDRPDILPVQDAIGMDMTMSGDSRRQKCYTNRDFLAGEFVERKASVGYMFVAMVSYLVHMFNKRRPIQMHRVRCPWQWSRSFAPIHVQSHSNQQTDADGCLTDGLEAIIDDEVFFDSPCEITTSAVNDESSDIGRQAAKPRPCADQSGVGVSVYMAERQQNGWRTSALNSGGNATSDINLTGDQSSHQPGAAHIPLCSSVSSQMQPAMRSSHSTTSTCNRGNRITAQLLDGVLENSRRPPLRCIKYFSVNDLDDRTDHRPFFTYWINTVQVVVLILSIICYGIAPIGIGSEQKTGQVLVTSLSLQTVQHVEQRNLWIGPRNIDLVHMGAKFAACMRRDIKITEVVTKTRRHERETACCIRNDDSGCVQSSQAECSIRGLYPTKSISTWKKWSPSESGPGGRISGSVCGLDPKFCDAPASIAPYEWPDDITKWPICRKTNSFTQRYRYKDHTSEHMVCEVIGHPCCTGLYGECRITTREYCDFIKGYFHEEASLCSQISCLNNVCGMFPFISVETPDQLYRLLTSLCMHAGILHLAITLIFQHLFLADLERLIGTVRTAIVYIMSGFAGNLTSAILVPHRPEVGPSASLSGVVASLIALLVWMHWKYLHKPHIALFKLLLLCSVLVGIGTLPYQLNFLGLLAGVICGCLLTMSLVPFTTFSKYGRKKKINLIWTCVLFHVVVYTAMIVTFYIHPSEFHSISFVDMFSNSNGYDNFTNADHHGVDVVSSNTRYSQTQNSQYYYHHHSDDIIRKSVTFTEKALVSHILYPTAPRKTSAQQWQEVEYSRSFNHLSNYSDRIKKSIGNISKLKQVFTSPIRFSNKNNHSNLMTELTSVHSENKQKYLGYINNNTEFNVL.

3 disordered regions span residues 1–36 (MSSNGSDLGHNNRRNEKGNPDSVHSSMRGSMSSTRR), 560–579 (GNEDAGQSNGTNGNYAPDRP), and 740–766 (TSALNSGGNATSDINLTGDQSSHQPGA). At 1–843 (MSSNGSDLGH…RPFFTYWINT (843 aa)) the chain is on the cytoplasmic side. Residues 22 to 33 (SVHSSMRGSMSS) show a composition bias toward low complexity. Composition is skewed to polar residues over residues 564 to 573 (AGQSNGTNGN) and 740 to 763 (TSALNSGGNATSDINLTGDQSSHQ). The chain crosses the membrane as a helical span at residues 844-864 (VQVVVLILSIICYGIAPIGIG). Residues 865–1099 (SEQKTGQVLV…PDQLYRLLTS (235 aa)) lie on the Lumenal side of the membrane. Residues 1100-1120 (LCMHAGILHLAITLIFQHLFL) traverse the membrane as a helical segment. Residues 1121–1131 (ADLERLIGTVR) lie on the Cytoplasmic side of the membrane. Residues 1132-1152 (TAIVYIMSGFAGNLTSAILVP) form a helical membrane-spanning segment. At 1153-1156 (HRPE) the chain is on the lumenal side. Residues 1157 to 1177 (VGPSASLSGVVASLIALLVWM) form a helical membrane-spanning segment. The Cytoplasmic portion of the chain corresponds to 1178–1186 (HWKYLHKPH). Residues 1187-1207 (IALFKLLLLCSVLVGIGTLPY) traverse the membrane as a helical segment. The Lumenal portion of the chain corresponds to 1208-1210 (QLN). A helical membrane pass occupies residues 1211–1231 (FLGLLAGVICGCLLTMSLVPF). Residues 1232–1245 (TTFSKYGRKKKINL) are Cytoplasmic-facing. The chain crosses the membrane as a helical span at residues 1246–1266 (IWTCVLFHVVVYTAMIVTFYI). Topologically, residues 1267 to 1429 (HPSEFHSISF…INNNTEFNVL (163 aa)) are lumenal.

This sequence belongs to the peptidase S54 family. As to expression, specifically expressed in the nervous system and in brain.

It localises to the endoplasmic reticulum membrane. Its function is as follows. Rhomboid protease-like protein which has no protease activity but regulates the secretion of several ligands of the epidermal growth factor receptor. Indirectly activates the epidermal growth factor receptor signaling pathway and may thereby regulate sleep, cell survival, proliferation and migration. This is Inactive rhomboid protein 1 (rho-5) from Drosophila melanogaster (Fruit fly).